The primary structure comprises 525 residues: Bifunctional purine biosynthesis protein PurH (525 aa).

An MGS-like domain is found at 1–149 (MSDPVIKRAL…KNHESVTVIT (149 aa)).

Belongs to the PurH family.

It catalyses the reaction (6R)-10-formyltetrahydrofolate + 5-amino-1-(5-phospho-beta-D-ribosyl)imidazole-4-carboxamide = 5-formamido-1-(5-phospho-D-ribosyl)imidazole-4-carboxamide + (6S)-5,6,7,8-tetrahydrofolate. The catalysed reaction is IMP + H2O = 5-formamido-1-(5-phospho-D-ribosyl)imidazole-4-carboxamide. It participates in purine metabolism; IMP biosynthesis via de novo pathway; 5-formamido-1-(5-phospho-D-ribosyl)imidazole-4-carboxamide from 5-amino-1-(5-phospho-D-ribosyl)imidazole-4-carboxamide (10-formyl THF route): step 1/1. It functions in the pathway purine metabolism; IMP biosynthesis via de novo pathway; IMP from 5-formamido-1-(5-phospho-D-ribosyl)imidazole-4-carboxamide: step 1/1. The chain is Bifunctional purine biosynthesis protein PurH from Chlorobium phaeobacteroides (strain BS1).